Consider the following 151-residue polypeptide: Transcriptional regulator MraZ (151 aa).

2 SpoVT-AbrB domains span residues A5 to E52 and A81 to A124.

The protein belongs to the MraZ family. Forms oligomers.

It is found in the cytoplasm. The protein resides in the nucleoid. This is Transcriptional regulator MraZ from Pseudomonas syringae pv. syringae (strain B728a).